We begin with the raw amino-acid sequence, 351 residues long: N-acetyl-gamma-glutamyl-phosphate reductase (351 aa).

Cysteine 154 is a catalytic residue.

It belongs to the NAGSA dehydrogenase family. Type 1 subfamily.

The protein resides in the cytoplasm. It carries out the reaction N-acetyl-L-glutamate 5-semialdehyde + phosphate + NADP(+) = N-acetyl-L-glutamyl 5-phosphate + NADPH + H(+). It functions in the pathway amino-acid biosynthesis; L-arginine biosynthesis; N(2)-acetyl-L-ornithine from L-glutamate: step 3/4. Its function is as follows. Catalyzes the NADPH-dependent reduction of N-acetyl-5-glutamyl phosphate to yield N-acetyl-L-glutamate 5-semialdehyde. The sequence is that of N-acetyl-gamma-glutamyl-phosphate reductase from Prochlorococcus marinus (strain MIT 9312).